Consider the following 2304-residue polypeptide: Protein Ycf2 (2304 aa).

1637-1644 contacts ATP; sequence GSIGTGRS.

It belongs to the Ycf2 family.

It is found in the plastid. Its subcellular location is the chloroplast stroma. In terms of biological role, probable ATPase of unknown function. Its presence in a non-photosynthetic plant (Epifagus virginiana) and experiments in tobacco indicate that it has an essential function which is probably not related to photosynthesis. The protein is Protein Ycf2 of Amborella trichopoda.